Consider the following 83-residue polypeptide: Small ribosomal subunit protein uS17 (83 aa).

It belongs to the universal ribosomal protein uS17 family. In terms of assembly, part of the 30S ribosomal subunit.

Its function is as follows. One of the primary rRNA binding proteins, it binds specifically to the 5'-end of 16S ribosomal RNA. The polypeptide is Small ribosomal subunit protein uS17 (Francisella philomiragia subsp. philomiragia (strain ATCC 25017 / CCUG 19701 / FSC 153 / O#319-036)).